The following is a 151-amino-acid chain: Ribonuclease H (151 aa).

The 141-residue stretch at 1–141 (MKHVDIFTDG…ADELARKGME (141 aa)) folds into the RNase H type-1 domain. The Mg(2+) site is built by aspartate 9, glutamate 47, aspartate 69, and aspartate 133.

This sequence belongs to the RNase H family. Monomer. Requires Mg(2+) as cofactor.

The protein resides in the cytoplasm. The catalysed reaction is Endonucleolytic cleavage to 5'-phosphomonoester.. Its function is as follows. Endonuclease that specifically degrades the RNA of RNA-DNA hybrids. This Rhizobium johnstonii (strain DSM 114642 / LMG 32736 / 3841) (Rhizobium leguminosarum bv. viciae) protein is Ribonuclease H.